We begin with the raw amino-acid sequence, 955 residues long: MSSASVTAFEKEHLWMYLQALGFEPGPATIACGKIVSHTHLGVNMFDKLNRDAFHIISYFLFQVLDQSLTKEVFKFCWPPFDQKSDTEFRKHCCEWIKRISGECGSSFPQVVGSLFLSPGGPKFIHLMYHFARFVAMKYIKSNSKNSSHHFVETFNIKPQDLHKCIARCHFARSRFLQILQRQDCVTQKYQENAQLSVKQVRNLRSECIGLENQIKKMEPYDDHSNMEEKIQKVRSLWASVNETLMFLEKEREVVSSVLSLVNQYALDGTNVAINIPRLLLDKIEKQMFQLHIGNVYEAGKLNLLTVIQLLNEVLKVMKYERCQADQARLTVDLHYLEKETKFQKERLSDLKHMRYRIKDDLTTIRHSVVEKQGEWHKKWKEFLGLSPFSLIKGWTPSVDLLPPMSPLSFDPASEEVYAKSILCQYPASLPDAHKQHNQENGCRGDSDTLGALHDLANSPASFLSQSVSSSDRNSVTVLEKDTKMGTPKEKNEAISKKIPEFEVENSPLSDVAKNTESSAFGGSLPAKKSDPFQKEQDHLVEEVARAVLSDSPQLSEGKEIKLEELIDSLGSNPFLTRNQIPRTPENLITEIRSSWRKAIEMEENRTKEPIQMDAEHREVLPESLPVLHNQREFSMADFLLETTVSDFGQSHLTEEKVISDCECVPQKHVLTSHIDEPPTQNQSDLLNKKVICKQDLECLAFTKLSETSRMETFSPAVGNRIDVMGGSEEEFMKILDHLEVSCNKPSTNKTMLWNSFQISSGISSKSFKDNDFGILHETLPEEVGHLSFNSSSSSEANFKLEPNSPMHGGTLLEDVVGGRQTTPESDFNLQALRSRYEALKKSLSKKREESYLSNSQTPERHKPELSPTPQNVQTDDTLNFLDTCDLHTEHIKPSLRTSIGERKRSLSPLIKFSPVEQRLRTTIACSLGELPNLKEEDILNKSLDAKEPPSDLTR.

Positions 188–219 (QKYQENAQLSVKQVRNLRSECIGLENQIKKME) form a coiled coil. Ser-406 is modified (phosphoserine). The segment at 474–495 (NSVTVLEKDTKMGTPKEKNEAI) is disordered. Over residues 479–495 (LEKDTKMGTPKEKNEAI) the composition is skewed to basic and acidic residues. Ser-507, Ser-524, Ser-530, Ser-550, and Ser-552 each carry phosphoserine. Thr-584 carries the phosphothreonine modification. Phosphoserine is present on residues Ser-715, Ser-728, Ser-742, and Ser-805. The tract at residues 789-814 (FNSSSSSEANFKLEPNSPMHGGTLLE) is disordered. A Phosphothreonine modification is found at Thr-823. A disordered region spans residues 848 to 876 (REESYLSNSQTPERHKPELSPTPQNVQTD). Residues Ser-908, Ser-914, and Ser-943 each carry the phosphoserine modification.

This sequence belongs to the HAUS6 family. Component of the HAUS augmin-like complex. The complex interacts with the gamma-tubulin ring complex and this interaction is required for spindle assembly. Interacts with PLK1, NEDD1 and gamma-tubulin. Interacts with EML3 (phosphorylated at 'Thr-881'). Phosphorylated during mitosis.

The protein localises to the cytoplasm. It is found in the cytoskeleton. The protein resides in the spindle. Its subcellular location is the microtubule organizing center. It localises to the centrosome. Functionally, contributes to mitotic spindle assembly, maintenance of centrosome integrity and completion of cytokinesis as part of the HAUS augmin-like complex. Promotes the nucleation of microtubules from the spindle through recruitment of NEDD1 and gamma-tubulin. This chain is HAUS augmin-like complex subunit 6 (HAUS6), found in Homo sapiens (Human).